Reading from the N-terminus, the 446-residue chain is tRNA-2-methylthio-N(6)-dimethylallyladenosine synthase (446 aa).

An MTTase N-terminal domain is found at 3–120 (KKLFIETHGC…LPEMIDAARS (118 aa)). [4Fe-4S] cluster-binding residues include cysteine 12, cysteine 49, cysteine 83, cysteine 157, cysteine 161, and cysteine 164. A Radical SAM core domain is found at 143 to 375 (RVDGPTAFVS…QGRIHQQGYE (233 aa)). Residues 378 to 442 (RRMVGSTQRI…PHSLRGTLIE (65 aa)) form the TRAM domain.

This sequence belongs to the methylthiotransferase family. MiaB subfamily. Monomer. The cofactor is [4Fe-4S] cluster.

The protein resides in the cytoplasm. The catalysed reaction is N(6)-dimethylallyladenosine(37) in tRNA + (sulfur carrier)-SH + AH2 + 2 S-adenosyl-L-methionine = 2-methylsulfanyl-N(6)-dimethylallyladenosine(37) in tRNA + (sulfur carrier)-H + 5'-deoxyadenosine + L-methionine + A + S-adenosyl-L-homocysteine + 2 H(+). Its function is as follows. Catalyzes the methylthiolation of N6-(dimethylallyl)adenosine (i(6)A), leading to the formation of 2-methylthio-N6-(dimethylallyl)adenosine (ms(2)i(6)A) at position 37 in tRNAs that read codons beginning with uridine. The protein is tRNA-2-methylthio-N(6)-dimethylallyladenosine synthase of Pseudomonas paraeruginosa (strain DSM 24068 / PA7) (Pseudomonas aeruginosa (strain PA7)).